The sequence spans 601 residues: Glutathione-regulated potassium-efflux system protein KefB (601 aa).

The next 13 helical transmembrane spans lie at 4–24 (SDFL…VPLA), 29–49 (IGAV…GLGF), 55–75 (EILH…GLEL), 87–107 (IFGV…GLLM), 115–135 (AAVV…LQLM), 152–172 (VLLF…LLAG), 177–197 (HFDW…LIGG), 207–227 (FIAA…LVLG), 230–250 (LFMD…GVLL), 268–288 (GLLL…GVLY), 291–311 (LLWV…VLYL), 324–344 (MQFA…FSSA), and 356–376 (ALLL…MKLV). The region spanning 400–519 (KPQVIVVGFG…AGVTQFSRET (120 aa)) is the RCK N-terminal domain.

This sequence belongs to the monovalent cation:proton antiporter 2 (CPA2) transporter (TC 2.A.37) family. KefB subfamily. Interacts with the regulatory subunit KefG.

It localises to the cell inner membrane. In terms of biological role, pore-forming subunit of a potassium efflux system that confers protection against electrophiles. Catalyzes K(+)/H(+) antiport. This chain is Glutathione-regulated potassium-efflux system protein KefB, found in Escherichia coli O127:H6 (strain E2348/69 / EPEC).